A 115-amino-acid polypeptide reads, in one-letter code: HTH-type transcriptional regulator SarR (115 aa).

Positions 51-74 (SKEIAKCSEFKPYYLTKALQKLKD) form a DNA-binding region, H-T-H motif.

Belongs to the SarA family. Homodimer.

It is found in the cytoplasm. Its function is as follows. Negative regulator of sarA transcription at late exponential and stationary growth phases. It contributes to the modulation of target genes downstream of the sarA regulatory cascade. Also, positively regulates expression of primary transcripts RNAII and RNAIII generated by agr (virulence accessory gene regulator) locus. This is HTH-type transcriptional regulator SarR (sarR) from Staphylococcus aureus (strain NCTC 8325 / PS 47).